Consider the following 702-residue polypeptide: Acetylcholinesterase (702 aa).

The N-terminal stretch at 1 to 36 (MEIRGLITRLLGPCHLRHLILCSLGLYSILVQSVHC) is a signal peptide. The disordered stretch occupies residues 107-134 (HIHSTTTRRRGLTRRESSSDATDSDPLV). N-linked (GlcNAc...) asparagine glycosylation occurs at N187. Cysteines 195 and 222 form a disulfide. S327 serves as the catalytic Acyl-ester intermediate. Cysteines 381 and 394 form a disulfide. Active-site charge relay system residues include E453 and H567. A disulfide bridge connects residues C529 and C650. N-linked (GlcNAc...) asparagine glycosylation is present at N637.

It belongs to the type-B carboxylesterase/lipase family.

The protein localises to the synapse. It is found in the secreted. The protein resides in the cell membrane. The enzyme catalyses acetylcholine + H2O = choline + acetate + H(+). Its function is as follows. Rapidly hydrolyzes choline released into the synapse. The sequence is that of Acetylcholinesterase (ACHE1) from Culex pipiens (House mosquito).